The primary structure comprises 315 residues: Ribose-phosphate pyrophosphokinase (315 aa).

ATP is bound by residues 40-42 (DGE) and 99-100 (RQ). The Mg(2+) site is built by histidine 133 and aspartate 175. The active site involves lysine 198. Residues arginine 200, aspartate 224, and 228 to 232 (DTAHS) each bind D-ribose 5-phosphate.

The protein belongs to the ribose-phosphate pyrophosphokinase family. Class I subfamily. As to quaternary structure, homohexamer. Mg(2+) serves as cofactor.

The protein localises to the cytoplasm. The enzyme catalyses D-ribose 5-phosphate + ATP = 5-phospho-alpha-D-ribose 1-diphosphate + AMP + H(+). It participates in metabolic intermediate biosynthesis; 5-phospho-alpha-D-ribose 1-diphosphate biosynthesis; 5-phospho-alpha-D-ribose 1-diphosphate from D-ribose 5-phosphate (route I): step 1/1. Involved in the biosynthesis of the central metabolite phospho-alpha-D-ribosyl-1-pyrophosphate (PRPP) via the transfer of pyrophosphoryl group from ATP to 1-hydroxyl of ribose-5-phosphate (Rib-5-P). The sequence is that of Ribose-phosphate pyrophosphokinase from Thermotoga maritima (strain ATCC 43589 / DSM 3109 / JCM 10099 / NBRC 100826 / MSB8).